Consider the following 195-residue polypeptide: Pyridoxal 5'-phosphate synthase subunit PdxT (195 aa).

Position 46–48 (46–48 (GES)) interacts with L-glutamine. Catalysis depends on Cys78, which acts as the Nucleophile. Residues Arg107 and 136–137 (IR) contribute to the L-glutamine site. Catalysis depends on charge relay system residues His173 and Glu175.

It belongs to the glutaminase PdxT/SNO family. In terms of assembly, in the presence of PdxS, forms a dodecamer of heterodimers. Only shows activity in the heterodimer.

The enzyme catalyses aldehydo-D-ribose 5-phosphate + D-glyceraldehyde 3-phosphate + L-glutamine = pyridoxal 5'-phosphate + L-glutamate + phosphate + 3 H2O + H(+). The catalysed reaction is L-glutamine + H2O = L-glutamate + NH4(+). Its pathway is cofactor biosynthesis; pyridoxal 5'-phosphate biosynthesis. Functionally, catalyzes the hydrolysis of glutamine to glutamate and ammonia as part of the biosynthesis of pyridoxal 5'-phosphate. The resulting ammonia molecule is channeled to the active site of PdxS. The chain is Pyridoxal 5'-phosphate synthase subunit PdxT from Dehalococcoides mccartyi (strain ATCC BAA-2100 / JCM 16839 / KCTC 5957 / BAV1).